The following is a 199-amino-acid chain: Phosphoheptose isomerase (199 aa).

The SIS domain occupies 36–198; it reads MSQCLLNEHK…DRKLIPSSED (163 aa). Residue 51–53 participates in substrate binding; sequence NGG. Zn(2+) is bound by residues His60 and Glu64. Residues Glu64, 93–94, 119–121, Ser124, and Gln174 contribute to the substrate site; these read ND and STS. 2 residues coordinate Zn(2+): Gln174 and His182.

The protein belongs to the SIS family. GmhA subfamily. Homotetramer. Zn(2+) serves as cofactor.

The protein localises to the cytoplasm. It catalyses the reaction 2 D-sedoheptulose 7-phosphate = D-glycero-alpha-D-manno-heptose 7-phosphate + D-glycero-beta-D-manno-heptose 7-phosphate. It participates in carbohydrate biosynthesis; D-glycero-D-manno-heptose 7-phosphate biosynthesis; D-glycero-alpha-D-manno-heptose 7-phosphate and D-glycero-beta-D-manno-heptose 7-phosphate from sedoheptulose 7-phosphate: step 1/1. Functionally, catalyzes the isomerization of sedoheptulose 7-phosphate in D-glycero-D-manno-heptose 7-phosphate. The protein is Phosphoheptose isomerase of Coxiella burnetii (strain RSA 331 / Henzerling II).